The chain runs to 146 residues: Holo-[acyl-carrier-protein] synthase (146 aa).

Residues D9 and E63 each contribute to the Mg(2+) site.

This sequence belongs to the P-Pant transferase superfamily. AcpS family. Requires Mg(2+) as cofactor.

It is found in the cytoplasm. The enzyme catalyses apo-[ACP] + CoA = holo-[ACP] + adenosine 3',5'-bisphosphate + H(+). Functionally, transfers the 4'-phosphopantetheine moiety from coenzyme A to a Ser of acyl-carrier-protein. This chain is Holo-[acyl-carrier-protein] synthase, found in Burkholderia ambifaria (strain ATCC BAA-244 / DSM 16087 / CCUG 44356 / LMG 19182 / AMMD) (Burkholderia cepacia (strain AMMD)).